An 88-amino-acid chain; its full sequence is DNA-directed RNA polymerase subunit omega (88 aa).

This sequence belongs to the RNA polymerase subunit omega family. The RNAP catalytic core consists of 2 alpha, 1 beta, 1 beta' and 1 omega subunit. When a sigma factor is associated with the core the holoenzyme is formed, which can initiate transcription.

The catalysed reaction is RNA(n) + a ribonucleoside 5'-triphosphate = RNA(n+1) + diphosphate. Promotes RNA polymerase assembly. Latches the N- and C-terminal regions of the beta' subunit thereby facilitating its interaction with the beta and alpha subunits. This chain is DNA-directed RNA polymerase subunit omega, found in Salinispora tropica (strain ATCC BAA-916 / DSM 44818 / JCM 13857 / NBRC 105044 / CNB-440).